The primary structure comprises 253 residues: MILSAFSLEGKVAVVTGCDTGLGQGMALGLAQAGCDIVGINIVEPTETIEQVTALGRRFLSLTADLRKIDGIPALLDRAVAEFGHIDILVNNAGLIRREDALEFSEKDWDDVMNLNIKSVFFMSQAAAKHFIAQGNGGKIINIASMLSFQGGIRVPSYTASKSGVMGVTRLMANEWAKHNINVNAIAPGYMATNNTQQLRADEQRSAEILDRIPAGRWGLPSDLMGPIVFLASSASDYVNGYTIAVDGGWLAR.

Position 14-38 (14-38 (VVTGCDTGLGQGMALGLAQAGCDIV)) interacts with NAD(+). S145 contributes to the substrate binding site. Residue Y158 is the Proton acceptor of the active site.

Belongs to the short-chain dehydrogenases/reductases (SDR) family. Homotetramer.

It catalyses the reaction 2-dehydro-3-deoxy-D-gluconate + NAD(+) = 3-deoxy-D-glycero-2,5-hexodiulosonate + NADH + H(+). The catalysed reaction is 4-pregnen-20,21-diol-3-one + NAD(+) = 21-hydroxyprogesterone + NADH + H(+). Functionally, catalyzes the reversible reduction of 2,5-diketo-3-deoxygluconate (DKII or 4,6-dihydroxy-2,5-dioxohexanoate) into 2-keto-3-deoxygluconate (KDG or 2-dehydro-3-deoxygluconate) with a concomitant oxidation of NADH. To a lesser extent, can also reduce 5-keto-D-gluconate and oxidize D-gluconate and 1,2-propanediol. Together with KduI, seems to play a role in the catabolism of hexuronates under osmotic stress conditions, substituting for the regular hexuronate degrading enzymes UxaABC and UxuAB whose expression is repressed in these conditions. In vitro, also exhibits NADH-dependent 20-ketosteroid reductase activity against eukaryotic steroid hormone 11-deoxycorticosterone (11-DOC), which is converted into the product 4-pregnen-20,21-diol-3-one. In addition to 11-DOC, five other C21 steroid compounds (11-deoxycortisol, cortisol, corticosterone, cortisone, and 21-hydroxypregnenolone) are reduced by KduD, but steroids lacking the hydroxyl group at C21 position, such as pregnenolone, testosterone propionate, cortisone acetate, or progesterone, cannot be used as substrate. The polypeptide is 2-dehydro-3-deoxy-D-gluconate 5-dehydrogenase (Escherichia coli (strain K12)).